The primary structure comprises 407 residues: Phosphopentomutase (407 aa).

Asp-11, Asp-305, His-310, Asp-346, His-347, and His-358 together coordinate Mn(2+).

Belongs to the phosphopentomutase family. Mn(2+) serves as cofactor.

It localises to the cytoplasm. It carries out the reaction 2-deoxy-alpha-D-ribose 1-phosphate = 2-deoxy-D-ribose 5-phosphate. It catalyses the reaction alpha-D-ribose 1-phosphate = D-ribose 5-phosphate. The protein operates within carbohydrate degradation; 2-deoxy-D-ribose 1-phosphate degradation; D-glyceraldehyde 3-phosphate and acetaldehyde from 2-deoxy-alpha-D-ribose 1-phosphate: step 1/2. Its function is as follows. Isomerase that catalyzes the conversion of deoxy-ribose 1-phosphate (dRib-1-P) and ribose 1-phosphate (Rib-1-P) to deoxy-ribose 5-phosphate (dRib-5-P) and ribose 5-phosphate (Rib-5-P), respectively. In Legionella pneumophila (strain Paris), this protein is Phosphopentomutase.